Reading from the N-terminus, the 250-residue chain is NAD-dependent protein deacylase (250 aa).

Residues methionine 1–isoleucine 248 form the Deacetylase sirtuin-type domain. Glycine 20–tryptophan 39 serves as a coordination point for NAD(+). Residues tyrosine 64 and arginine 67 each coordinate substrate. Glutamine 98–aspartate 101 is an NAD(+) binding site. Histidine 116 (proton acceptor) is an active-site residue. Cysteine 124, cysteine 127, cysteine 150, and cysteine 153 together coordinate Zn(2+). Residues glycine 190–serine 192, asparagine 216–glutamate 218, and alanine 234 contribute to the NAD(+) site.

It belongs to the sirtuin family. Class III subfamily. Zn(2+) serves as cofactor.

The protein resides in the cytoplasm. It catalyses the reaction N(6)-acetyl-L-lysyl-[protein] + NAD(+) + H2O = 2''-O-acetyl-ADP-D-ribose + nicotinamide + L-lysyl-[protein]. The enzyme catalyses N(6)-succinyl-L-lysyl-[protein] + NAD(+) + H2O = 2''-O-succinyl-ADP-D-ribose + nicotinamide + L-lysyl-[protein]. NAD-dependent lysine deacetylase and desuccinylase that specifically removes acetyl and succinyl groups on target proteins. Modulates the activities of several proteins which are inactive in their acylated form. Deacetylates the N-terminal lysine residue of Alba, the major archaeal chromatin protein and that, in turn, increases Alba's DNA binding affinity, thereby repressing transcription. The sequence is that of NAD-dependent protein deacylase from Pyrococcus furiosus (strain ATCC 43587 / DSM 3638 / JCM 8422 / Vc1).